Here is a 346-residue protein sequence, read N- to C-terminus: Hydroxymethylglutaryl-CoA synthase (346 aa).

Aspartate 28 provides a ligand contact to (3S)-3-hydroxy-3-methylglutaryl-CoA. Glutamate 80 serves as the catalytic Proton donor/acceptor. Residues cysteine 112 and threonine 153 each contribute to the (3S)-3-hydroxy-3-methylglutaryl-CoA site. Cysteine 112 (acyl-thioester intermediate) is an active-site residue. Arginine 199 is a CoA binding site. 2 residues coordinate (3S)-3-hydroxy-3-methylglutaryl-CoA: threonine 201 and histidine 234. Catalysis depends on histidine 234, which acts as the Proton donor/acceptor. CoA is bound at residue lysine 239. (3S)-3-hydroxy-3-methylglutaryl-CoA is bound by residues lysine 243, asparagine 266, and serine 296.

The protein belongs to the thiolase-like superfamily. Archaeal HMG-CoA synthase family. As to quaternary structure, interacts with acetoacetyl-CoA thiolase that catalyzes the precedent step in the pathway and with a DUF35 protein. The acetoacetyl-CoA thiolase/HMG-CoA synthase complex channels the intermediate via a fused CoA-binding site, which allows for efficient coupling of the endergonic thiolase reaction with the exergonic HMGCS reaction.

It catalyses the reaction acetoacetyl-CoA + acetyl-CoA + H2O = (3S)-3-hydroxy-3-methylglutaryl-CoA + CoA + H(+). It participates in metabolic intermediate biosynthesis; (R)-mevalonate biosynthesis; (R)-mevalonate from acetyl-CoA: step 2/3. Functionally, catalyzes the condensation of acetyl-CoA with acetoacetyl-CoA to form 3-hydroxy-3-methylglutaryl-CoA (HMG-CoA). Functions in the mevalonate (MVA) pathway leading to isopentenyl diphosphate (IPP), a key precursor for the biosynthesis of isoprenoid compounds that are building blocks of archaeal membrane lipids. This Methanothermobacter thermautotrophicus (strain ATCC 29096 / DSM 1053 / JCM 10044 / NBRC 100330 / Delta H) (Methanobacterium thermoautotrophicum) protein is Hydroxymethylglutaryl-CoA synthase.